A 790-amino-acid chain; its full sequence is MSRRRHSYENDGGQPHKRRKTSDANETEDHLESLICKVGEKSACSLESNLEGLAGVLEADLPNYKSKILRLLCTVARLLPEKLTIYTTLVGLLNARNYNFGGEFVEAMIRQLKESLKANNYNEAVYLVRFLSDLVNCHVIAAPSMVAMFENFVSVTQEEDVPQVRRDWYVYAFLSSLPWVGKELYEKKDAEMDRIFSTTESYLKRRQKTHVPMLQVWTADKPHPQEEYLDCLWAQIQKLKKDRWQERHILRPYLAFDSILCEALQHNLPPFTPPPHTEDSVYPMPRVIFRMFDYTDDPEGPVMPGSHSVERFVIEENLHCIIKSYWKERKTCAAQLVSYPGKNKIPLNYHIVEVIFAELFQLPAPPHIDVMYTTLLIELCKLQPGSLPQVLAQATEMLYMRLDTMSTTCVDRFINWFSHHLSNFQFRWSWEDWSDCLTQDLESPKPKFVREVLEKCMRLSYHQHILDIVPPTFSALCPANPTCIYKYGDESSNSLPGHSVALCLSVAFKSKATNDEIFSILKDVPNPNQVDDDDEGFRFNPLKIEVFVQTLLHLAAKSFSHSFSALAKFHEVFKTLAESDKGKLHVLRVMFEVWRNHPQMIAVLVDKMIRTQIVDCAAVANWIFSSELSRDFTRLFVWEILHSTIRKMNKHVLKIQKELEEAKEKLARQHKRRSDDDDRSSDRKDGALEEQIERLQEKVEAAQSEQKNLFLVIFQRFIMILTEHLVRCETDGTSILTPWYKNCIERLQQIFLQHHQTIQQYMVTLENLLFTAELDPHILAVFQQFCALQA.

The disordered stretch occupies residues Met1–Glu26. Residues Arg3–Lys20 carry the Nuclear localization signal motif. Ser7 is subject to Phosphoserine. Thr21 carries the phosphothreonine modification. 2 positions are modified to phosphoserine: Ser22 and Ser201. An MIF4G domain is found at Glu28 to Lys240. Lys204 bears the N6-acetyllysine mark. A coiled-coil region spans residues Ser643 to Ile713. Positions Leu666–Asp685 are disordered. Lys684 participates in a covalent cross-link: Glycyl lysine isopeptide (Lys-Gly) (interchain with G-Cter in SUMO2). Position 698 is an N6-acetyllysine (Lys698).

Belongs to the NCBP1 family. Component of the nuclear cap-binding complex (CBC), a heterodimer composed of NCBP1/CBP80 and NCBP2/CBP20 that interacts with m7GpppG-capped RNA. Found in a U snRNA export complex containing PHAX/RNUXA, NCBP1/CBP80, NCBP2/CBP20, RAN, XPO1 and m7G-capped RNA. Identified in a IGF2BP1-dependent mRNP granule complex containing untranslated mRNAs. Interacts with PHAX/RNUXA, SRRT/ARS2, EIF4G2, IGF2BP1, HNRNPF, HNRNPH1, KIAA0427/CTIF, PARN, DROSHA, UPF1 and ALYREF/THOC4. May interact with EIF4G1; the interaction is however controversial. The large PER complex involved in the repression of transcriptional termination is composed of at least PER2, CDK9, DDX5, DHX9, NCBP1/CBP80 and POLR2A (active). Component of an alternative nuclear cap-binding complex (CBC) composed of NCBP1/CBP80 and NCBP3. Interacts with METTL3. Interacts with ZFC3H1 in a RNase-insensitive manner. Interacts with MTREX. Interacts with TASOR. Interacts with DHX34; the interaction is RNA-dependent. Interacts with KPNA3. In terms of processing, dephosphorylated at Thr-21 by the PNUTS-PP1 complex during RNA polymerase II transcription pause-release. As to expression, expressed in the spermatogonia, spermatocytes and granular cells within the cerebellum.

It is found in the nucleus. Its subcellular location is the cytoplasm. Component of the cap-binding complex (CBC), which binds cotranscriptionally to the 5'-cap of pre-mRNAs and is involved in various processes such as pre-mRNA splicing, translation regulation, nonsense-mediated mRNA decay, RNA-mediated gene silencing (RNAi) by microRNAs (miRNAs) and mRNA export. The CBC complex is involved in mRNA export from the nucleus via its interaction with ALYREF/THOC4/ALY, leading to the recruitment of the mRNA export machinery to the 5'-end of mRNA and to mRNA export in a 5' to 3' direction through the nuclear pore. The CBC complex is also involved in mediating U snRNA and intronless mRNAs export from the nucleus. The CBC complex is essential for a pioneer round of mRNA translation, before steady state translation when the CBC complex is replaced by cytoplasmic cap-binding protein eIF4E. The pioneer round of mRNA translation mediated by the CBC complex plays a central role in nonsense-mediated mRNA decay (NMD), NMD only taking place in mRNAs bound to the CBC complex, but not on eIF4E-bound mRNAs. The CBC complex enhances NMD in mRNAs containing at least one exon-junction complex (EJC) via its interaction with UPF1, promoting the interaction between UPF1 and UPF2. The CBC complex is also involved in 'failsafe' NMD, which is independent of the EJC complex, while it does not participate in Staufen-mediated mRNA decay (SMD). During cell proliferation, the CBC complex is also involved in microRNAs (miRNAs) biogenesis via its interaction with SRRT/ARS2 and is required for miRNA-mediated RNA interference. The CBC complex also acts as a negative regulator of PARN, thereby acting as an inhibitor of mRNA deadenylation. In the CBC complex, NCBP1/CBP80 does not bind directly capped RNAs (m7GpppG-capped RNA) but is required to stabilize the movement of the N-terminal loop of NCBP2/CBP20 and lock the CBC into a high affinity cap-binding state with the cap structure. Associates with NCBP3 to form an alternative cap-binding complex (CBC) which plays a key role in mRNA export and is particularly important in cellular stress situations such as virus infections. The conventional CBC with NCBP2 binds both small nuclear RNA (snRNA) and messenger (mRNA) and is involved in their export from the nucleus whereas the alternative CBC with NCBP3 does not bind snRNA and associates only with mRNA thereby playing a role only in mRNA export. NCBP1/CBP80 is required for cell growth and viability. The polypeptide is Nuclear cap-binding protein subunit 1 (Ncbp1) (Mus musculus (Mouse)).